A 956-amino-acid chain; its full sequence is Pollen-specific leucine-rich repeat extensin-like protein 1 (956 aa).

The first 30 residues, 1-30, serve as a signal peptide directing secretion; sequence MTRRTMEKPFGCFLLLFCFTISIFFYSAAA. 11 LRR repeats span residues 39–59, 60–84, 119–143, 144–166, 168–191, 192–215, 217–238, 240–261, 262–285, 287–309, and 310–332; these read LTRR…DIEY, EVDL…AWKK, VLVV…LGLL, TDVA…SLSK, TLMY…ALSW, PSLK…IFDK, LDAI…IGKS, ASVV…IGQM, KNLN…IGSL, NVTV…LSGL, and ANVE…NICK. Residues asparagine 273 and asparagine 287 are each glycosylated (N-linked (GlcNAc...) asparagine). Asparagine 338 is a glycosylation site (N-linked (GlcNAc...) asparagine). Over residues 355–377 the composition is skewed to polar residues; the sequence is PGSSQEKQFDDTSNCLQNRPNQK. Disordered stretches follow at residues 355–380 and 397–956; these read PGSS…KSAK and CAGG…FPGY. The span at 408-417 shows a compositional bias: pro residues; it reads SPKPTPTPKA. 2 stretches are compositionally biased toward basic and acidic residues: residues 431–441 and 452–534; these read EPSKPKPEESP and TPSH…EESP. Pro residues predominate over residues 640-830; it reads QSPPVHSPPP…KPVTPLPPAT (191 aa). The interval 651 to 956 is contains the Ser-Pro(4) repeats; it reads PPVHSPPPPV…SPPPPMFPGY (306 aa). Positions 837–852 are enriched in polar residues; the sequence is PTPSSSESGEISTPVQ. The span at 947–956 shows a compositional bias: pro residues; sequence SPPPPMFPGY.

In terms of processing, hydroxylated on proline residues in the S-P-P-P-P repeat. Post-translationally, O-glycosylated on hydroxyprolines. In terms of tissue distribution, expressed in flowers, stamen, pollen, and pollinated carpels.

It localises to the secreted. Its subcellular location is the cell wall. Modulates cell morphogenesis by regulating cell wall formation and assembly, and/or growth polarization. This is Pollen-specific leucine-rich repeat extensin-like protein 1 (PEX1) from Arabidopsis thaliana (Mouse-ear cress).